The following is a 143-amino-acid chain: Nucleoside diphosphate kinase (143 aa).

Positions 11, 59, 87, 93, 104, and 114 each coordinate ATP. The active-site Pros-phosphohistidine intermediate is the His-117.

This sequence belongs to the NDK family. In terms of assembly, homotetramer. The cofactor is Mg(2+).

The protein localises to the cytoplasm. It carries out the reaction a 2'-deoxyribonucleoside 5'-diphosphate + ATP = a 2'-deoxyribonucleoside 5'-triphosphate + ADP. The catalysed reaction is a ribonucleoside 5'-diphosphate + ATP = a ribonucleoside 5'-triphosphate + ADP. In terms of biological role, major role in the synthesis of nucleoside triphosphates other than ATP. The ATP gamma phosphate is transferred to the NDP beta phosphate via a ping-pong mechanism, using a phosphorylated active-site intermediate. This Azotobacter vinelandii (strain DJ / ATCC BAA-1303) protein is Nucleoside diphosphate kinase.